The chain runs to 372 residues: Alanine dehydrogenase 1 (372 aa).

Residue His-94 is part of the active site. 170–200 (TYVIFGGGVAATNAANVALGLNAKVIIIELN) is a binding site for NAD(+).

It belongs to the AlaDH/PNT family.

It carries out the reaction L-alanine + NAD(+) + H2O = pyruvate + NH4(+) + NADH + H(+). It participates in amino-acid degradation; L-alanine degradation via dehydrogenase pathway; NH(3) and pyruvate from L-alanine: step 1/1. Functionally, may play a role in cell wall synthesis as L-alanine is an important constituent of the peptidoglycan layer. This Staphylococcus aureus (strain bovine RF122 / ET3-1) protein is Alanine dehydrogenase 1 (ald1).